Consider the following 188-residue polypeptide: Elongation factor P (188 aa).

Belongs to the elongation factor P family.

It is found in the cytoplasm. It functions in the pathway protein biosynthesis; polypeptide chain elongation. Its function is as follows. Involved in peptide bond synthesis. Stimulates efficient translation and peptide-bond synthesis on native or reconstituted 70S ribosomes in vitro. Probably functions indirectly by altering the affinity of the ribosome for aminoacyl-tRNA, thus increasing their reactivity as acceptors for peptidyl transferase. The protein is Elongation factor P of Rickettsia canadensis (strain McKiel).